Here is a 122-residue protein sequence, read N- to C-terminus: uncharacterized protein (122 aa).

The next 2 membrane-spanning stretches (helical) occupy residues 34–54 (IIFLTVGLLLFIAALALGVLV) and 91–111 (FVLAAFGFVCMVASFLYFVSF).

It localises to the cell membrane. This is an uncharacterized protein from Mycoplasma pneumoniae (strain ATCC 29342 / M129 / Subtype 1) (Mycoplasmoides pneumoniae).